Consider the following 1382-residue polypeptide: DNA-directed RNA polymerase subunit beta (1382 aa).

This sequence belongs to the RNA polymerase beta chain family. In terms of assembly, the RNAP catalytic core consists of 2 alpha, 1 beta, 1 beta' and 1 omega subunit. When a sigma factor is associated with the core the holoenzyme is formed, which can initiate transcription.

It carries out the reaction RNA(n) + a ribonucleoside 5'-triphosphate = RNA(n+1) + diphosphate. Functionally, DNA-dependent RNA polymerase catalyzes the transcription of DNA into RNA using the four ribonucleoside triphosphates as substrates. This Aliarcobacter butzleri (strain RM4018) (Arcobacter butzleri) protein is DNA-directed RNA polymerase subunit beta.